The chain runs to 482 residues: tRNA sulfurtransferase (482 aa).

In terms of domain architecture, THUMP spans 61-165; the sequence is LAIRDALTRI…DDRLLLIKGR (105 aa). Residues 183-184, Lys265, Gly287, and Gln296 each bind ATP; that span reads LI. A disulfide bond links Cys344 and Cys456. In terms of domain architecture, Rhodanese spans 404-482; it reads FGPNDVILDI…GFNNVKVYRP (79 aa). Cys456 (cysteine persulfide intermediate) is an active-site residue.

It belongs to the ThiI family.

Its subcellular location is the cytoplasm. The enzyme catalyses [ThiI sulfur-carrier protein]-S-sulfanyl-L-cysteine + a uridine in tRNA + 2 reduced [2Fe-2S]-[ferredoxin] + ATP + H(+) = [ThiI sulfur-carrier protein]-L-cysteine + a 4-thiouridine in tRNA + 2 oxidized [2Fe-2S]-[ferredoxin] + AMP + diphosphate. It carries out the reaction [ThiS sulfur-carrier protein]-C-terminal Gly-Gly-AMP + S-sulfanyl-L-cysteinyl-[cysteine desulfurase] + AH2 = [ThiS sulfur-carrier protein]-C-terminal-Gly-aminoethanethioate + L-cysteinyl-[cysteine desulfurase] + A + AMP + 2 H(+). Its pathway is cofactor biosynthesis; thiamine diphosphate biosynthesis. Its function is as follows. Catalyzes the ATP-dependent transfer of a sulfur to tRNA to produce 4-thiouridine in position 8 of tRNAs, which functions as a near-UV photosensor. Also catalyzes the transfer of sulfur to the sulfur carrier protein ThiS, forming ThiS-thiocarboxylate. This is a step in the synthesis of thiazole, in the thiamine biosynthesis pathway. The sulfur is donated as persulfide by IscS. The chain is tRNA sulfurtransferase from Escherichia coli O139:H28 (strain E24377A / ETEC).